A 248-amino-acid chain; its full sequence is 3-deoxy-manno-octulosonate cytidylyltransferase (248 aa).

The protein belongs to the KdsB family.

Its subcellular location is the cytoplasm. The catalysed reaction is 3-deoxy-alpha-D-manno-oct-2-ulosonate + CTP = CMP-3-deoxy-beta-D-manno-octulosonate + diphosphate. It participates in nucleotide-sugar biosynthesis; CMP-3-deoxy-D-manno-octulosonate biosynthesis; CMP-3-deoxy-D-manno-octulosonate from 3-deoxy-D-manno-octulosonate and CTP: step 1/1. Its pathway is bacterial outer membrane biogenesis; lipopolysaccharide biosynthesis. Functionally, activates KDO (a required 8-carbon sugar) for incorporation into bacterial lipopolysaccharide in Gram-negative bacteria. The protein is 3-deoxy-manno-octulosonate cytidylyltransferase of Escherichia coli O139:H28 (strain E24377A / ETEC).